A 192-amino-acid polypeptide reads, in one-letter code: Transcription antitermination protein NusB (192 aa).

Belongs to the NusB family.

Its function is as follows. Involved in transcription antitermination. Required for transcription of ribosomal RNA (rRNA) genes. Binds specifically to the boxA antiterminator sequence of the ribosomal RNA (rrn) operons. The chain is Transcription antitermination protein NusB from Lactococcus lactis subsp. lactis (strain IL1403) (Streptococcus lactis).